The primary structure comprises 600 residues: CTP synthase (600 aa).

Positions 304–570 constitute a Glutamine amidotransferase type-1 domain; that stretch reads TIVLVGKYTH…IQSGEEVEWS (267 aa). Residues Cys403, His532, and Glu534 each act as for GATase activity in the active site.

This sequence belongs to the CTP synthase family.

It catalyses the reaction UTP + L-glutamine + ATP + H2O = CTP + L-glutamate + ADP + phosphate + 2 H(+). Its pathway is pyrimidine metabolism; CTP biosynthesis via de novo pathway; CTP from UDP: step 2/2. Catalyzes the ATP-dependent amination of UTP to CTP with either L-glutamine or ammonia as the source of nitrogen. The polypeptide is CTP synthase (ura7) (Schizosaccharomyces pombe (strain 972 / ATCC 24843) (Fission yeast)).